We begin with the raw amino-acid sequence, 182 residues long: T-cell surface glycoprotein CD3 gamma chain (182 aa).

Positions 1-22 are cleaved as a signal peptide; the sequence is MEQGKHLAGLILAITLLQGTMA. The 76-residue stretch at 23 to 98 folds into the Ig-like domain; the sequence is QLKEGKHSVL…GSKENSKRLQ (76 aa). Over 23-116 the chain is Extracellular; sequence QLKEGKHSVL…CIELNSATVS (94 aa). Cysteines 46 and 87 form a disulfide. Residue N66 is glycosylated (N-linked (GlcNAc...) asparagine). A helical membrane pass occupies residues 117–137; that stretch reads GFIFTEIISLFFLAVGVYFIA. Residues 138 to 182 are Cytoplasmic-facing; it reads GQDGVRQSRASDKQTLLSNDQLYQPLKDREDDQYSHLQGNNSRKN. At S145 the chain carries Phosphoserine. Position 148 is a phosphoserine; by PKC (S148). Residues 149–177 enclose the ITAM domain; the sequence is DKQTLLSNDQLYQPLKDREDDQYSHLQGN. The Di-leucine motif motif lies at 153–154; the sequence is LL.

As to quaternary structure, the TCR-CD3 complex is composed of a CD3D/CD3E and a CD3G/CD3E heterodimers that preferentially associate with TCRalpha and TCRbeta, respectively, to form TCRalpha/CD3E/CD3G and TCRbeta/CD3G/CD3E trimers. In turn, the hexamer interacts with CD3Z homodimer to form the TCR-CD3 complex. Alternatively, TCRalpha and TCRbeta can be replaced by TCRgamma and TCRdelta. In terms of processing, phosphorylated on Tyr residues after T-cell receptor triggering by LCK in association with CD4/CD8. Phosphorylated also by PKC; leading to the TCR complex down-regulation. Phosphorylated on Tyr residues after T-cell receptor triggering by LCK in association with CD4/CD8.

It localises to the cell membrane. In terms of biological role, part of the TCR-CD3 complex present on T-lymphocyte cell surface that plays an essential role in adaptive immune response. When antigen presenting cells (APCs) activate T-cell receptor (TCR), TCR-mediated signals are transmitted across the cell membrane by the CD3 chains CD3D, CD3E, CD3G and CD3Z. All CD3 chains contain immunoreceptor tyrosine-based activation motifs (ITAMs) in their cytoplasmic domain. Upon TCR engagement, these motifs become phosphorylated by Src family protein tyrosine kinases LCK and FYN, resulting in the activation of downstream signaling pathways. In addition to this role of signal transduction in T-cell activation, CD3G plays an essential role in the dynamic regulation of TCR expression at the cell surface. Indeed, constitutive TCR cycling is dependent on the di-leucine-based (diL) receptor-sorting motif present in CD3G. The protein is T-cell surface glycoprotein CD3 gamma chain (CD3G) of Sus scrofa (Pig).